The chain runs to 145 residues: 3-dehydroquinate dehydratase (145 aa).

The active-site Proton acceptor is the tyrosine 24. The substrate site is built by asparagine 76, histidine 82, and aspartate 89. The Proton donor role is filled by histidine 102. Substrate is bound by residues leucine 103–serine 104 and arginine 113.

This sequence belongs to the type-II 3-dehydroquinase family. Homododecamer.

The catalysed reaction is 3-dehydroquinate = 3-dehydroshikimate + H2O. It functions in the pathway metabolic intermediate biosynthesis; chorismate biosynthesis; chorismate from D-erythrose 4-phosphate and phosphoenolpyruvate: step 3/7. In terms of biological role, catalyzes a trans-dehydration via an enolate intermediate. In Nitrosomonas eutropha (strain DSM 101675 / C91 / Nm57), this protein is 3-dehydroquinate dehydratase.